A 158-amino-acid chain; its full sequence is Ribonuclease HI (158 aa).

An RNase H type-1 domain is found at 3 to 144 (ELKLIHIFTD…CDQLARAAAE (142 aa)). Mg(2+)-binding residues include D12, E50, D72, and D136.

Belongs to the RNase H family. As to quaternary structure, monomer. It depends on Mg(2+) as a cofactor.

The protein resides in the cytoplasm. It carries out the reaction Endonucleolytic cleavage to 5'-phosphomonoester.. Its function is as follows. Endonuclease that specifically degrades the RNA of RNA-DNA hybrids. The polypeptide is Ribonuclease HI (Shewanella oneidensis (strain ATCC 700550 / JCM 31522 / CIP 106686 / LMG 19005 / NCIMB 14063 / MR-1)).